A 474-amino-acid chain; its full sequence is ATP synthase subunit beta (474 aa).

Residue 152–159 (GGAGVGKT) participates in ATP binding.

This sequence belongs to the ATPase alpha/beta chains family. In terms of assembly, F-type ATPases have 2 components, CF(1) - the catalytic core - and CF(0) - the membrane proton channel. CF(1) has five subunits: alpha(3), beta(3), gamma(1), delta(1), epsilon(1). CF(0) has four main subunits: a(1), b(1), b'(1) and c(9-12).

It localises to the cell inner membrane. The catalysed reaction is ATP + H2O + 4 H(+)(in) = ADP + phosphate + 5 H(+)(out). Its function is as follows. Produces ATP from ADP in the presence of a proton gradient across the membrane. The catalytic sites are hosted primarily by the beta subunits. The protein is ATP synthase subunit beta of Rhodospirillum rubrum (strain ATCC 11170 / ATH 1.1.1 / DSM 467 / LMG 4362 / NCIMB 8255 / S1).